The following is a 228-amino-acid chain: 6-carboxyhexanoate--CoA ligase (228 aa).

It belongs to the BioW family. As to quaternary structure, homodimer. It depends on Mg(2+) as a cofactor.

The enzyme catalyses heptanedioate + ATP + CoA = 6-carboxyhexanoyl-CoA + AMP + diphosphate. It participates in metabolic intermediate metabolism; pimeloyl-CoA biosynthesis; pimeloyl-CoA from pimelate: step 1/1. Its function is as follows. Catalyzes the transformation of pimelate into pimeloyl-CoA with concomitant hydrolysis of ATP to AMP. In Staphylococcus epidermidis (strain ATCC 35984 / DSM 28319 / BCRC 17069 / CCUG 31568 / BM 3577 / RP62A), this protein is 6-carboxyhexanoate--CoA ligase.